Here is a 408-residue protein sequence, read N- to C-terminus: S-adenosylmethionine synthase (408 aa).

Residue 140 to 145 (GQGSVD) coordinates ATP.

It belongs to the AdoMet synthase 2 family. Mg(2+) serves as cofactor.

The catalysed reaction is L-methionine + ATP + H2O = S-adenosyl-L-methionine + phosphate + diphosphate. It functions in the pathway amino-acid biosynthesis; S-adenosyl-L-methionine biosynthesis; S-adenosyl-L-methionine from L-methionine: step 1/1. In terms of biological role, catalyzes the formation of S-adenosylmethionine from methionine and ATP. This is S-adenosylmethionine synthase from Caldivirga maquilingensis (strain ATCC 700844 / DSM 13496 / JCM 10307 / IC-167).